Here is a 34-residue protein sequence, read N- to C-terminus: Toxin GTx1-15 (34 aa).

Disulfide bonds link C2-C17, C9-C23, and C16-C30. F34 carries the post-translational modification Phenylalanine amide.

Belongs to the neurotoxin 10 (Hwtx-1) family. 08 (Gtx1-15) subfamily. Expressed by the venom gland.

It localises to the secreted. Potent voltage-gated sodium channel blocker. Potently inhibits the voltage-gated sodium channels Nav1.7/SCN9A (IC(50)=0.58-10 nM). Also shows a moderate activity on Nav1.1/SCN1A (IC(50)=6 nM), Nav1.2/SCN2A (IC(50)=5-128 nM), Nav1.3/SCN3A (IC(50)=20.3-170 nM), and Nav1.6/SCN8A (IC(50)=17-20.1 nM). Shows an unclear inhibition of Nav1.4/SCN4A (IC(50)=200 nM to &gt;10 uM), Nav1.5/SCN5A (IC(50)=140 nM to &gt;10 uM) and Nav1.8/SCN10A (IC(50)=68-12200 nM). Weakly blocks the low voltage-gated calcium channels Cav3.1/CACNA1G (30% inhibition of the peak current at 9.8 nM). shows moderate affinity for lipid bilayers. In vivo, when tested on the OD1-induced mouse model of Nav1.7/SCN9A-mediated pain, the toxin is effective when co-administered with OD1, but lacks efficacy when delivered systemically. This Grammostola porteri (Tarantula spider) protein is Toxin GTx1-15.